The sequence spans 84 residues: Large ribosomal subunit protein bL27 (84 aa).

This sequence belongs to the bacterial ribosomal protein bL27 family.

The chain is Large ribosomal subunit protein bL27 from Salinispora tropica (strain ATCC BAA-916 / DSM 44818 / JCM 13857 / NBRC 105044 / CNB-440).